Reading from the N-terminus, the 342-residue chain is S-adenosylmethionine:tRNA ribosyltransferase-isomerase (342 aa).

It belongs to the QueA family. As to quaternary structure, monomer.

The protein resides in the cytoplasm. It catalyses the reaction 7-aminomethyl-7-carbaguanosine(34) in tRNA + S-adenosyl-L-methionine = epoxyqueuosine(34) in tRNA + adenine + L-methionine + 2 H(+). The protein operates within tRNA modification; tRNA-queuosine biosynthesis. Functionally, transfers and isomerizes the ribose moiety from AdoMet to the 7-aminomethyl group of 7-deazaguanine (preQ1-tRNA) to give epoxyqueuosine (oQ-tRNA). The protein is S-adenosylmethionine:tRNA ribosyltransferase-isomerase of Streptococcus pyogenes serotype M3 (strain ATCC BAA-595 / MGAS315).